The following is a 301-amino-acid chain: Heme A synthase (301 aa).

The Cytoplasmic segment spans residues 1–7 (MHKGLKR). Residues 8–28 (LGVITSLGVLLVLIQGALVTN) traverse the membrane as a helical segment. At 29–56 (TGSGEGCGQTWPLCFGQVIPLDPPPETV) the chain is on the extracellular side. A disulfide bridge links Cys-35 with Cys-42. The helical transmembrane segment at 57-77 (IEFSHRLVAGIVGMLVILMAI) threads the bilayer. Glu-58 is a catalytic residue. His-61 is a binding site for heme o. Residues 78–92 (WSWRRLKHMPETRFL) are Cytoplasmic-facing. Residues 93–113 (AVISVFMIIFQGLLGAGAVVF) traverse the membrane as a helical segment. The Extracellular portion of the chain corresponds to 114 to 117 (GQSD). A helical membrane pass occupies residues 118–138 (LIMALHFGFSALSFASVVLLT). His-123 serves as a coordination point for heme o. Residues 139-159 (RLAFEDSNPQKQYAPIVSKAY) lie on the Cytoplasmic side of the membrane. A helical transmembrane segment spans residues 160–180 (KGYVIFVAIYSYVAIYTGAYV). Over 181–215 (KHTNATLACSGFPLCNGQWVPDVFTEAIGVQLLHR) the chain is Extracellular. An intrachain disulfide couples Cys-189 to Cys-195. His-214 serves as a coordination point for heme b. A helical transmembrane segment spans residues 216-236 (SAAILLSLLLLVLFIWTVKTF). Over 237–240 (RASR) the chain is Cytoplasmic. The chain crosses the membrane as a helical span at residues 241 to 261 (VLVVCASLAMLLVIGQAASGV). The Extracellular portion of the chain corresponds to 262–274 (AVVLTYNATLTLG). The helical transmembrane segment at 275–295 (IFHALLISLLFTLLCYMVMLV) threads the bilayer. Residue His-277 coordinates heme b. The Cytoplasmic portion of the chain corresponds to 296–301 (TRHKAK).

It belongs to the COX15/CtaA family. Type 1 subfamily. In terms of assembly, interacts with CtaB. Requires heme b as cofactor.

It localises to the cell membrane. The catalysed reaction is Fe(II)-heme o + 2 A + H2O = Fe(II)-heme a + 2 AH2. The protein operates within porphyrin-containing compound metabolism; heme A biosynthesis; heme A from heme O: step 1/1. Functionally, catalyzes the conversion of heme O to heme A by two successive hydroxylations of the methyl group at C8. The first hydroxylation forms heme I, the second hydroxylation results in an unstable dihydroxymethyl group, which spontaneously dehydrates, resulting in the formyl group of heme A. The chain is Heme A synthase from Shouchella clausii (strain KSM-K16) (Alkalihalobacillus clausii).